The primary structure comprises 106 residues: Small ribosomal subunit protein bS18 (106 aa).

The tract at residues 1-39 (MNGRNNDMGRNGGADYDDRDFGRTPDLNADAPGRRRTGR) is disordered.

Belongs to the bacterial ribosomal protein bS18 family. Part of the 30S ribosomal subunit. Forms a tight heterodimer with protein bS6.

In terms of biological role, binds as a heterodimer with protein bS6 to the central domain of the 16S rRNA, where it helps stabilize the platform of the 30S subunit. This Sorangium cellulosum (strain So ce56) (Polyangium cellulosum (strain So ce56)) protein is Small ribosomal subunit protein bS18.